Reading from the N-terminus, the 441-residue chain is Ribulose bisphosphate carboxylase/oxygenase activase, chloroplastic (441 aa).

167 to 174 (VWGGKGQG) provides a ligand contact to ATP.

Belongs to the RuBisCO activase family.

It is found in the plastid. Its subcellular location is the chloroplast stroma. Functionally, activation of RuBisCO (ribulose-1,5-bisphosphate carboxylase/oxygenase; EC 4.1.1.39) involves the ATP-dependent carboxylation of the epsilon-amino group of lysine leading to a carbamate structure. The sequence is that of Ribulose bisphosphate carboxylase/oxygenase activase, chloroplastic (RCA1) from Phaseolus vulgaris (Kidney bean).